A 95-amino-acid polypeptide reads, in one-letter code: Aspartyl/glutamyl-tRNA(Asn/Gln) amidotransferase subunit C (95 aa).

This sequence belongs to the GatC family. Heterotrimer of A, B and C subunits.

It carries out the reaction L-glutamyl-tRNA(Gln) + L-glutamine + ATP + H2O = L-glutaminyl-tRNA(Gln) + L-glutamate + ADP + phosphate + H(+). The catalysed reaction is L-aspartyl-tRNA(Asn) + L-glutamine + ATP + H2O = L-asparaginyl-tRNA(Asn) + L-glutamate + ADP + phosphate + 2 H(+). Functionally, allows the formation of correctly charged Asn-tRNA(Asn) or Gln-tRNA(Gln) through the transamidation of misacylated Asp-tRNA(Asn) or Glu-tRNA(Gln) in organisms which lack either or both of asparaginyl-tRNA or glutaminyl-tRNA synthetases. The reaction takes place in the presence of glutamine and ATP through an activated phospho-Asp-tRNA(Asn) or phospho-Glu-tRNA(Gln). The sequence is that of Aspartyl/glutamyl-tRNA(Asn/Gln) amidotransferase subunit C from Paracoccus denitrificans (strain Pd 1222).